A 731-amino-acid polypeptide reads, in one-letter code: Probable G-protein coupled receptor 149 (731 aa).

The Extracellular portion of the chain corresponds to 1–35 (MSLFLSNLSTNDSSLWKENHNSTDLLNPPGTLNIY). 3 N-linked (GlcNAc...) asparagine glycosylation sites follow: Asn7, Asn11, and Asn21. The chain crosses the membrane as a helical span at residues 36–56 (LFCLTCLMTFAALVGSIYSLI). The Cytoplasmic portion of the chain corresponds to 57-69 (SLLKMQNRTVVSM). A helical membrane pass occupies residues 70–90 (LVASWSVDDLMSVLSVTIFMF). The Extracellular portion of the chain corresponds to 91–109 (LQWPNEVPGYFQFLCTTSA). Cys105 and Cys182 are oxidised to a cystine. The chain crosses the membrane as a helical span at residues 110 to 132 (LMYLCQGLSSNLKATLLVSYNFY). Residues 133–155 (TMHRGVGSQTASRRSGQVLGVVL) lie on the Cytoplasmic side of the membrane. A helical transmembrane segment spans residues 156–176 (TVWAASLLLSALPLCGWGAFV). Topologically, residues 177–189 (RTPWGCLVDCSSS) are extracellular. A helical transmembrane segment spans residues 190–210 (YVLFLSIVYALAFGLLVGLSV). At 211–310 (PLTHRLLCSE…SFTVSVAQKR (100 aa)) the chain is on the cytoplasmic side. A disordered region spans residues 234-271 (RGASIPGTPPTAGRVVSLSPEDAPGPSLRRSGGCSPSS). Residues 311–331 (FALILALTKVVLWLPMMMHMV) form a helical membrane-spanning segment. At 332-342 (VQNVVGFQSLP) the chain is on the extracellular side. The chain crosses the membrane as a helical span at residues 343-363 (LETFSFLLTLLATTVTPVFVL). Residues 364–731 (SKRWTHLPCG…RKREEESKGS (368 aa)) lie on the Cytoplasmic side of the membrane. The disordered stretch occupies residues 475–526 (NTDITEAKQDSNNKKDAFSDKTGGDINYEETTFSEGPERRLSHEESQKPDLS). Basic and acidic residues-rich tracts occupy residues 479–497 (TEAKQDSNNKKDAFSDKTG) and 510–526 (GPERRLSHEESQKPDLS).

This sequence belongs to the G-protein coupled receptor 1 family.

It localises to the cell membrane. In terms of biological role, orphan receptor. The sequence is that of Probable G-protein coupled receptor 149 (GPR149) from Homo sapiens (Human).